The sequence spans 379 residues: PqqA peptide cyclase (379 aa).

The Radical SAM core domain occupies 8 to 220 (LPAPIGLLAE…IRVVEEARER (213 aa)). Cys-22, Cys-26, and Cys-29 together coordinate [4Fe-4S] cluster.

This sequence belongs to the radical SAM superfamily. PqqE family. As to quaternary structure, interacts with PqqD. The interaction is necessary for activity of PqqE. The cofactor is [4Fe-4S] cluster.

It catalyses the reaction [PQQ precursor protein] + S-adenosyl-L-methionine = E-Y cross-linked-[PQQ precursor protein] + 5'-deoxyadenosine + L-methionine + H(+). The protein operates within cofactor biosynthesis; pyrroloquinoline quinone biosynthesis. Catalyzes the cross-linking of a glutamate residue and a tyrosine residue in the PqqA protein as part of the biosynthesis of pyrroloquinoline quinone (PQQ). In Methylobacterium sp. (strain 4-46), this protein is PqqA peptide cyclase.